The chain runs to 295 residues: Tyrosine recombinase XerC (295 aa).

Residues 1–85 enclose the Core-binding (CB) domain; sequence MLTALNRYWD…ALRRFLSFLV (85 aa). One can recognise a Tyr recombinase domain in the interval 106 to 285; the sequence is HLPKNMDGEQ…NFQHLAEVYD (180 aa). Residues Arg145, Lys169, His237, Arg240, and His263 contribute to the active site. Tyr272 acts as the O-(3'-phospho-DNA)-tyrosine intermediate in catalysis.

It belongs to the 'phage' integrase family. XerC subfamily. Forms a cyclic heterotetrameric complex composed of two molecules of XerC and two molecules of XerD.

The protein resides in the cytoplasm. Its function is as follows. Site-specific tyrosine recombinase, which acts by catalyzing the cutting and rejoining of the recombining DNA molecules. The XerC-XerD complex is essential to convert dimers of the bacterial chromosome into monomers to permit their segregation at cell division. It also contributes to the segregational stability of plasmids. The sequence is that of Tyrosine recombinase XerC from Haemophilus influenzae (strain PittEE).